Here is a 1322-residue protein sequence, read N- to C-terminus: Mediator of RNA polymerase II transcription subunit 12 (1322 aa).

Residues 1 to 21 are disordered; it reads MSPSKYLLTPPEELHPLTDSN.

This sequence belongs to the Mediator complex subunit 12 family. As to quaternary structure, component of the SRB8-11 complex, which itself associates with the Mediator complex.

Its subcellular location is the nucleus. Functionally, component of the SRB8-11 complex. The SRB8-11 complex is a regulatory module of the Mediator complex which is itself involved in regulation of basal and activated RNA polymerase II-dependent transcription. The SRB8-11 complex may be involved in the transcriptional repression of a subset of genes regulated by Mediator. It may inhibit the association of the Mediator complex with RNA polymerase II to form the holoenzyme complex. In Kluyveromyces lactis (strain ATCC 8585 / CBS 2359 / DSM 70799 / NBRC 1267 / NRRL Y-1140 / WM37) (Yeast), this protein is Mediator of RNA polymerase II transcription subunit 12 (SRB8).